The chain runs to 116 residues: Iron-sulfur cluster assembly protein CyaY (116 aa).

Belongs to the frataxin family.

Involved in iron-sulfur (Fe-S) cluster assembly. May act as a regulator of Fe-S biogenesis. The polypeptide is Iron-sulfur cluster assembly protein CyaY (Buchnera aphidicola subsp. Acyrthosiphon pisum (strain APS) (Acyrthosiphon pisum symbiotic bacterium)).